Here is a 318-residue protein sequence, read N- to C-terminus: Basic leucine zipper (bZIP) transcription factor atfB (318 aa).

Disordered regions lie at residues 79–100 and 114–164; these read LKNT…KKLQ and FNSS…EKRE. Positions 160 to 199 are basic motif; that stretch reads REKREKFLERNRLAASKCRQKKKEHTKLLETRFREVSSKK. Residues 160–223 enclose the bZIP domain; sequence REKREKFLER…LNLKNEMLRH (64 aa). Positions 202–216 are leucine-zipper; sequence LESEIEHLRSEVLNL. The disordered stretch occupies residues 247–304; sequence TPNRDLVSPMRSPEQMTASTPHGLSFGFDGPMQLPSEMGSPLDQRRDSEQSIMTESSY.

Belongs to the bZIP family. ATF subfamily.

It localises to the nucleus. Functionally, transcription factor that acts as a key player in the regulatory circuit that integrates secondary metabolism and cellular response to oxidative stress. Regulates the genes involved in development, stress response, and secondary metabolism through direct binding to their promoters. Particularly involved in the resistance to oxidative stress in asexual conidiospores. Binds aflatoxin gene promoters carrying the cAMP-response element (CRE1) under aflatoxin-inducing conditions. This Aspergillus parasiticus (strain ATCC 56775 / NRRL 5862 / SRRC 143 / SU-1) protein is Basic leucine zipper (bZIP) transcription factor atfB.